Reading from the N-terminus, the 932-residue chain is Beta-mannosidase A (932 aa).

A signal peptide spans 1 to 19 (MRVPAQATIAVLASAVSSP). Asn-41, Asn-81, Asn-94, Asn-249, Asn-261, Asn-284, Asn-289, Asn-318, and Asn-348 each carry an N-linked (GlcNAc...) asparagine glycan. The active-site Proton donor is Glu-480. N-linked (GlcNAc...) asparagine glycosylation is found at Asn-538, Asn-551, Asn-609, Asn-624, Asn-632, Asn-659, Asn-739, and Asn-791.

It belongs to the glycosyl hydrolase 2 family. Beta-mannosidase A subfamily. Homodimer.

The protein resides in the secreted. The enzyme catalyses Hydrolysis of terminal, non-reducing beta-D-mannose residues in beta-D-mannosides.. The protein operates within glycan metabolism; N-glycan degradation. Exoglycosidase that cleaves the single beta-linked mannose residue from the non-reducing end of beta-mannosidic oligosaccharides of various complexity and length. Involved in the degradation of polymeric mannan and galactomannan. In Aspergillus terreus (strain NIH 2624 / FGSC A1156), this protein is Beta-mannosidase A (mndA).